Here is a 312-residue protein sequence, read N- to C-terminus: uncharacterized protein (312 aa).

The protein belongs to the asfivirus CP312R family.

Its subcellular location is the virion. This is an uncharacterized protein from African swine fever virus (strain Badajoz 1971 Vero-adapted) (Ba71V).